Reading from the N-terminus, the 185-residue chain is Elongation factor P (185 aa).

Belongs to the elongation factor P family.

The protein resides in the cytoplasm. It functions in the pathway protein biosynthesis; polypeptide chain elongation. Functionally, involved in peptide bond synthesis. Stimulates efficient translation and peptide-bond synthesis on native or reconstituted 70S ribosomes in vitro. Probably functions indirectly by altering the affinity of the ribosome for aminoacyl-tRNA, thus increasing their reactivity as acceptors for peptidyl transferase. The sequence is that of Elongation factor P from Methylobacillus flagellatus (strain ATCC 51484 / DSM 6875 / VKM B-1610 / KT).